A 157-amino-acid chain; its full sequence is Protein MG115 homolog (157 aa).

This sequence belongs to the CinA family.

The sequence is that of Protein MG115 homolog from Mycoplasma pneumoniae (strain ATCC 29342 / M129 / Subtype 1) (Mycoplasmoides pneumoniae).